The primary structure comprises 447 residues: 2-oxoadipate dioxygenase/decarboxylase (447 aa).

Positions 68, 72, and 224 each coordinate 2-oxoadipate. His-68 lines the Fe(2+) pocket. Fe(2+) is bound by residues His-224 and Glu-290. Residue Val-391 participates in 2-oxoadipate binding.

This sequence belongs to the 2-oxoadipate dioxygenase/decarboxylase family. Fe(2+) serves as cofactor.

It catalyses the reaction 2-oxoadipate + O2 = (R)-2-hydroxyglutarate + CO2. Catalyzes the decarboxylation and hydroxylation of 2-oxoadipate (2OA) to form D-2-hydroxyglutarate (D-2-HGA). This chain is 2-oxoadipate dioxygenase/decarboxylase (ydcJ), found in Escherichia coli (strain K12).